The following is a 2196-amino-acid chain: Cell polarity protein mor2 (2196 aa).

This sequence to yeast TAO3/PAG1.

It localises to the cytoplasm. The protein resides in the membrane. Functionally, required for the maintenance of cell polarity. Has a role in localizing F-actin at the cell tips. This is Cell polarity protein mor2 (mor2) from Schizosaccharomyces pombe (strain 972 / ATCC 24843) (Fission yeast).